Here is a 611-residue protein sequence, read N- to C-terminus: Pyrichalasin H cluster regulator pyiR (611 aa).

The zn(2)-C6 fungal-type DNA-binding region spans 11–47; that stretch reads CDRCRGHKLRCIRLDPGPNDTGALLPCKRCVKAGAEC. Disordered stretches follow at residues 53 to 128, 169 to 192, 265 to 291, 401 to 427, 521 to 550, and 564 to 593; these read LSVK…LPPW, ALAA…DGTT, GGAG…GRSS, AHEG…AAPQ, RGGL…SDER, and SWFT…RTVE. The segment covering 59–69 has biased composition (basic and acidic residues); that stretch reads GDGHHSAHRAT. Low complexity predominate over residues 98 to 109; the sequence is PTQPAPQRQTQR. Polar residues predominate over residues 265 to 279; sequence GGAGSQSLRDQQMQQ. Positions 572–587 are enriched in gly residues; sequence GGSGGSGPGEGTGDSN.

Its subcellular location is the nucleus. In terms of biological role, transcription factor that specifically regulates the expression of the gene cluster that mediates the biosynthesis of the mycotoxin pyrichalasin H, a tyrosine-derived cytochalasan that inhibits the growth of rice seedlings, but also inhibits lymphocyte capping and actin polymerization and alters cell morphology. Pyrichalasin H is indicated as the responsible agent for the genus-specific pathogenicity of M.grisea toward crabgrass. The chain is Pyrichalasin H cluster regulator pyiR from Pyricularia grisea (Crabgrass-specific blast fungus).